We begin with the raw amino-acid sequence, 308 residues long: Glutamyl-Q tRNA(Asp) synthetase (308 aa).

Residues 19 to 23 and glutamate 55 contribute to the L-glutamate site; that span reads RFAPS. The 'HIGH' region motif lies at 22 to 32; it reads PSPSGELHFGS. Positions 111, 113, 125, and 129 each coordinate Zn(2+). L-glutamate is bound by residues tyrosine 182 and arginine 200. A 'KMSKS' region motif is present at residues 238-242; that stretch reads KLSKQ. ATP is bound at residue lysine 241.

Belongs to the class-I aminoacyl-tRNA synthetase family. GluQ subfamily. The cofactor is Zn(2+).

In terms of biological role, catalyzes the tRNA-independent activation of glutamate in presence of ATP and the subsequent transfer of glutamate onto a tRNA(Asp). Glutamate is transferred on the 2-amino-5-(4,5-dihydroxy-2-cyclopenten-1-yl) moiety of the queuosine in the wobble position of the QUC anticodon. In Escherichia coli O6:H1 (strain CFT073 / ATCC 700928 / UPEC), this protein is Glutamyl-Q tRNA(Asp) synthetase.